The sequence spans 188 residues: MEDERSLSDICGGRLALHRRYYSPSCLEFCLSCPRISLRSITAVTCTVWLAAYGLFTLCENSMILSAAIFITLLGLLGYLHFVKIDHETLLIIDSLGIQMTSSYASGKESTTFIEMGKVKDVIINEAIYMQKVIYYLCILLKDPVEPHGISQVVPIFQSAKPRLDCLIEVYRSCQEILAHQKAASTSP.

It belongs to the PIGH family. Component of the glycosylphosphatidylinositol-N-acetylglucosaminyltransferase (GPI-GnT) complex composed at least by PIGA, PIGC, PIGH, PIGP, PIGQ, PIGY and DPM2. Interacts with PIGQ.

It localises to the cytoplasm. The protein operates within glycolipid biosynthesis; glycosylphosphatidylinositol-anchor biosynthesis. Functionally, part of the glycosylphosphatidylinositol-N-acetylglucosaminyltransferase (GPI-GnT) complex that catalyzes the transfer of N-acetylglucosamine from UDP-N-acetylglucosamine to phosphatidylinositol and participates in the first step of GPI biosynthesis. The sequence is that of Phosphatidylinositol N-acetylglucosaminyltransferase subunit H from Bos taurus (Bovine).